We begin with the raw amino-acid sequence, 300 residues long: Probable membrane transporter protein YtnM (300 aa).

8 helical membrane passes run 4–24 (LIVF…LGMA), 33–53 (LLAF…AEVV), 76–96 (LVIP…QLPG), 102–122 (YISL…LFQY), 139–159 (IPLG…WGPV), 206–226 (LWVF…AWLV), 231–251 (PQLM…RTLI), and 260–280 (VHPL…LFVL).

This sequence belongs to the 4-toluene sulfonate uptake permease (TSUP) (TC 2.A.102) family.

It localises to the cell membrane. This is Probable membrane transporter protein YtnM (ytnM) from Bacillus subtilis (strain 168).